The following is a 2560-amino-acid chain: Plipastatin synthase subunit B (2560 aa).

Positions 7-310 (IQDIYPLSHM…NTVPVRIRSA (304 aa)) are condensation 1. Residues 7 to 1042 (IQDIYPLSHM…AVKLMSLKEH (1036 aa)) form a domain 1 (tyrosine-activating) region. An adenylation 1 region spans residues 496–889 (TYRQLQVRAN…QAPGVKEAAV (394 aa)). The Carrier 1 domain occupies 965-1040 (APRTLIEADL…SMAVKLMSLK (76 aa)). At serine 1000 the chain carries O-(pantetheine 4'-phosphoryl)serine. The condensation 2 stretch occupies residues 1052 to 1342 (QRDVYPLSFS…NTLAMRSKPE (291 aa)). The domain 2 (D-allo-threonine-activating) stretch occupies residues 1052–2553 (QRDVYPLSFS…DLTLDELSEI (1502 aa)). The adenylation 2 stretch occupies residues 1527-1927 (TYRDLNEKAE…QYPMIKEAAV (401 aa)). Residues 2006 to 2080 (SPRNEIETVM…ELSARVRKDV (75 aa)) form the Carrier 2 domain. Residue serine 2041 is modified to O-(pantetheine 4'-phosphoryl)serine. Residues 2088-2553 (VEGEITWTPI…DLTLDELSEI (466 aa)) are epimerization.

The protein belongs to the ATP-dependent AMP-binding enzyme family. The cofactor is pantetheine 4'-phosphate.

This protein is a multifunctional enzyme, able to activate and polymerize the amino acids Tyr and Thr as part of the biosynthesis of the lipopeptide antibiotic plipastatin. The Thr residue is further converted to the D-allo-isomer form. The activation sites for these amino acids consist of individual domains. This chain is Plipastatin synthase subunit B (ppsB), found in Bacillus subtilis (strain 168).